Here is a 38-residue protein sequence, read N- to C-terminus: Cytochrome b6-f complex subunit 5 (38 aa).

Residues 5–25 traverse the membrane as a helical segment; that stretch reads LLSGIVLGLIPITLAGLFVTA.

It belongs to the PetG family. The 4 large subunits of the cytochrome b6-f complex are cytochrome b6, subunit IV (17 kDa polypeptide, PetD), cytochrome f and the Rieske protein, while the 4 small subunits are PetG, PetL, PetM and PetN. The complex functions as a dimer.

It is found in the plastid. The protein resides in the chloroplast thylakoid membrane. Functionally, component of the cytochrome b6-f complex, which mediates electron transfer between photosystem II (PSII) and photosystem I (PSI), cyclic electron flow around PSI, and state transitions. PetG is required for either the stability or assembly of the cytochrome b6-f complex. The polypeptide is Cytochrome b6-f complex subunit 5 (Adiantum capillus-veneris (Maidenhair fern)).